The sequence spans 220 residues: Protein-methionine-sulfoxide reductase heme-binding subunit MsrQ (220 aa).

The next 6 helical transmembrane spans lie at 20–40 (LWLL…LGAT), 52–72 (EHLL…VTPI), 86–106 (ALGL…MVLD), 122–142 (PFIT…LTSN), 153–173 (WSSL…HFLM), and 175–195 (VKSW…LLLW).

The protein belongs to the MsrQ family. In terms of assembly, heterodimer of a catalytic subunit (MsrP) and a heme-binding subunit (MsrQ). FMN is required as a cofactor. The cofactor is heme b.

The protein localises to the cell inner membrane. In terms of biological role, part of the MsrPQ system that repairs oxidized periplasmic proteins containing methionine sulfoxide residues (Met-O), using respiratory chain electrons. Thus protects these proteins from oxidative-stress damage caused by reactive species of oxygen and chlorine generated by the host defense mechanisms. MsrPQ is essential for the maintenance of envelope integrity under bleach stress, rescuing a wide series of structurally unrelated periplasmic proteins from methionine oxidation. MsrQ provides electrons for reduction to the reductase catalytic subunit MsrP, using the quinone pool of the respiratory chain. This is Protein-methionine-sulfoxide reductase heme-binding subunit MsrQ from Brucella abortus (strain S19).